A 354-amino-acid polypeptide reads, in one-letter code: Biotin synthase (354 aa).

Positions 64-282 (GDVELATLLS…IAVARITMPR (219 aa)) constitute a Radical SAM core domain. [4Fe-4S] cluster-binding residues include Cys-79, Cys-83, and Cys-86. [2Fe-2S] cluster-binding residues include Cys-123, Cys-154, Cys-214, and Arg-286.

The protein belongs to the radical SAM superfamily. Biotin synthase family. In terms of assembly, homodimer. The cofactor is [4Fe-4S] cluster. [2Fe-2S] cluster serves as cofactor.

The catalysed reaction is (4R,5S)-dethiobiotin + (sulfur carrier)-SH + 2 reduced [2Fe-2S]-[ferredoxin] + 2 S-adenosyl-L-methionine = (sulfur carrier)-H + biotin + 2 5'-deoxyadenosine + 2 L-methionine + 2 oxidized [2Fe-2S]-[ferredoxin]. It functions in the pathway cofactor biosynthesis; biotin biosynthesis; biotin from 7,8-diaminononanoate: step 2/2. Functionally, catalyzes the conversion of dethiobiotin (DTB) to biotin by the insertion of a sulfur atom into dethiobiotin via a radical-based mechanism. In Paracidovorax citrulli (strain AAC00-1) (Acidovorax citrulli), this protein is Biotin synthase.